Here is a 271-residue protein sequence, read N- to C-terminus: Undecaprenyl-diphosphatase (271 aa).

A run of 8 helical transmembrane segments spans residues 5 to 25 (YALF…FLPV), 45 to 65 (AATF…AVFW), 86 to 106 (TLSL…GLGI), 114 to 134 (LFGP…LIIA), 149 to 169 (ISYK…WPGF), 189 to 209 (AAEF…GLDL), 226 to 246 (VGFI…LALI), and 251 to 271 (FIPF…VFVA).

This sequence belongs to the UppP family.

It is found in the cell inner membrane. The enzyme catalyses di-trans,octa-cis-undecaprenyl diphosphate + H2O = di-trans,octa-cis-undecaprenyl phosphate + phosphate + H(+). Functionally, catalyzes the dephosphorylation of undecaprenyl diphosphate (UPP). Confers resistance to bacitracin. The protein is Undecaprenyl-diphosphatase of Aeromonas salmonicida (strain A449).